A 424-amino-acid chain; its full sequence is Elongation factor 1-alpha (424 aa).

The 219-residue stretch at lysine 5–valine 223 folds into the tr-type G domain. Residues glycine 14–serine 21 are G1. Residue glycine 14–serine 21 coordinates GTP. Residue serine 21 participates in Mg(2+) binding. The G2 stretch occupies residues glycine 70–aspartate 74. A G3 region spans residues aspartate 91–glycine 94. Residues aspartate 91–histidine 95 and asparagine 146–aspartate 149 each bind GTP. The G4 stretch occupies residues asparagine 146–aspartate 149. A G5 region spans residues serine 187–tyrosine 189.

The protein belongs to the TRAFAC class translation factor GTPase superfamily. Classic translation factor GTPase family. EF-Tu/EF-1A subfamily.

The protein localises to the cytoplasm. It catalyses the reaction GTP + H2O = GDP + phosphate + H(+). Functionally, GTP hydrolase that promotes the GTP-dependent binding of aminoacyl-tRNA to the A-site of ribosomes during protein biosynthesis. The chain is Elongation factor 1-alpha from Methanothrix thermoacetophila (strain DSM 6194 / JCM 14653 / NBRC 101360 / PT) (Methanosaeta thermophila).